Reading from the N-terminus, the 874-residue chain is Alanine--tRNA ligase (874 aa).

4 residues coordinate Zn(2+): His564, His568, Cys665, and His669.

The protein belongs to the class-II aminoacyl-tRNA synthetase family. Zn(2+) serves as cofactor.

The protein localises to the cytoplasm. It catalyses the reaction tRNA(Ala) + L-alanine + ATP = L-alanyl-tRNA(Ala) + AMP + diphosphate. Catalyzes the attachment of alanine to tRNA(Ala) in a two-step reaction: alanine is first activated by ATP to form Ala-AMP and then transferred to the acceptor end of tRNA(Ala). Also edits incorrectly charged Ser-tRNA(Ala) and Gly-tRNA(Ala) via its editing domain. The sequence is that of Alanine--tRNA ligase from Burkholderia cenocepacia (strain HI2424).